The chain runs to 537 residues: Phosphoenolpyruvate carboxykinase (ATP) (537 aa).

Residues Arg-61, Tyr-195, and Lys-201 each coordinate substrate. ATP is bound by residues Lys-201, His-220, and Gly-236–Thr-244. Mn(2+) contacts are provided by Lys-201 and His-220. Residue Asp-257 coordinates Mn(2+). Residues Glu-285, Arg-323, and Thr-448 each coordinate ATP. Arg-323 is a substrate binding site.

It belongs to the phosphoenolpyruvate carboxykinase (ATP) family. It depends on Mn(2+) as a cofactor.

The protein localises to the cytoplasm. It carries out the reaction oxaloacetate + ATP = phosphoenolpyruvate + ADP + CO2. The protein operates within carbohydrate biosynthesis; gluconeogenesis. Its function is as follows. Involved in the gluconeogenesis. Catalyzes the conversion of oxaloacetate (OAA) to phosphoenolpyruvate (PEP) through direct phosphoryl transfer between the nucleoside triphosphate and OAA. The polypeptide is Phosphoenolpyruvate carboxykinase (ATP) (Parvibaculum lavamentivorans (strain DS-1 / DSM 13023 / NCIMB 13966)).